Here is a 206-residue protein sequence, read N- to C-terminus: MTSFEEEQLRDHAVANLYRIGAIRFGDFNLSDGQKTHIYVDMRPVISCPDVLQTIASLIWRLRPSFNSSLLCGVPYTALALATCISLKYNISMVLRRKELKHSSQEDRIKVEGLFSSGQTCLVINDVIASGRSILETAKALEDEGLNIRESLVFLDRQVGGEAVLKEAGIKLRSVFTLEDLVKSLLSKCELKDTDAAMASALIKNL.

5-phospho-alpha-D-ribose 1-diphosphate is bound by residues R97, K98, K101, and 125–133 (NDVIASGRS). Position 157 (R157) interacts with orotate.

Belongs to the purine/pyrimidine phosphoribosyltransferase family. PyrE subfamily. Homodimer. Mg(2+) is required as a cofactor.

It carries out the reaction orotidine 5'-phosphate + diphosphate = orotate + 5-phospho-alpha-D-ribose 1-diphosphate. It participates in pyrimidine metabolism; UMP biosynthesis via de novo pathway; UMP from orotate: step 1/2. In terms of biological role, catalyzes the transfer of a ribosyl phosphate group from 5-phosphoribose 1-diphosphate to orotate, leading to the formation of orotidine monophosphate (OMP). The polypeptide is Orotate phosphoribosyltransferase (Chlamydia felis (strain Fe/C-56) (Chlamydophila felis)).